Here is a 233-residue protein sequence, read N- to C-terminus: Orotidine 5'-phosphate decarboxylase (233 aa).

Substrate contacts are provided by residues D11, K34, 61–70 (DLKLHDIPNT), T117, R179, Q189, G209, and R210. K63 (proton donor) is an active-site residue.

This sequence belongs to the OMP decarboxylase family. Type 1 subfamily. Homodimer.

It catalyses the reaction orotidine 5'-phosphate + H(+) = UMP + CO2. Its pathway is pyrimidine metabolism; UMP biosynthesis via de novo pathway; UMP from orotate: step 2/2. Functionally, catalyzes the decarboxylation of orotidine 5'-monophosphate (OMP) to uridine 5'-monophosphate (UMP). The polypeptide is Orotidine 5'-phosphate decarboxylase (Streptococcus agalactiae serotype III (strain NEM316)).